The following is a 590-amino-acid chain: MATIRRLQQTLSHLRPPKAPQLLSIVEGPTQPELLDITLGELLTLQSLQYGDYECLVFPWTGARWTYTDLKDEADRVARGLLAMGIQKGDRIGIMAGNCEQYISVFFAAARVGAILVVLNNTYTPSELYYALGHTDCRLLFLTPRIGRHSLEEVLAKLGPRPKEQGTSSALEEIIILRGQYSGFSTYEHVIQRGLPLPSHALQDREAELHSTDVCNLQFTSGSTGNPKAAMLTHHNLVNNSRFIGDRMNLTSFDILCCPPPLFHCFGLVLGMLAVVTHGSKIIFPSETFDPTAVLHAISDEKCTALHGVPTMFEAILSLPKPPNFDCSNLRTGIIAGAPVPRPLMKRLLEELNMTEYTSSYGLTEASPTCFNALTTDSIERRLTTVGKVMPHAKAKIIDTQGHIVPIGQRGELCIAGYQLTKGYWNNPEKTAEALITDSDGVTWLKTGDEAIFDEEGYCSITGRFKDIIIRGGENIYPLEIEERLAAHPAIEVASVIGIPDQKYGEVVGAFLALAADVSARPSDEELRAWTRETLGRHKAPQYFFVFGEEGVDRTIPVTGSGKVRKVDLRKIAASVLERRLAKTAAIKEK.

Positions 6–14 (RLQQTLSHL) match the PTS2-type peroxisomal targeting signal motif. ATP contacts are provided by residues 220-228 (TSGSTGNPK), 359-364 (SSYGLT), Asp-449, and Arg-464. Substrate is bound at residue Thr-364. Residues 472 to 474 (GGE) and 543 to 545 (YFF) each bind CoA. Lys-563 serves as a coordination point for ATP.

Belongs to the ATP-dependent AMP-binding enzyme family.

The protein resides in the peroxisome. Its pathway is siderophore biosynthesis. In terms of biological role, acyl-CoA ligase; part of the siderophore biosynthetic pathway. Aspergillus fumigatus produces 4 types of siderophores, low-molecular-mass iron chelators, including excreted fusarinine C (FsC) and triacetylfusarinine C (TAFC) for iron uptake and intacellular ferricrocin (FC) for hyphal and hydroxyferricrocin (HFC) for conidial iron distribution and storage. TAFC consists of 3 N(2)-acetyl-N(5)-anhydromevalonyl-N(5)-hydroxyornithine residues cyclically linked by ester bonds; FC is a cyclic hexapeptide with the structure Gly-Ser-Gly-(N(5)-acetyl-N(5)-hydroxyornithine)x3. The biosynthesis of all four siderophores depends on the hydroxylation of ornithine, catalyzed by the monooxygenase sidA. Subsequently, the pathways for biosynthesis of extra- and intracellular siderophores split. For biosynthesis of extracellular siderophores, the transacylase sidF transfers anhydromevalonyl to N(5)-hydroxyornithine. The required anhydromevalonyl-CoA moiety is derived from mevalonate by CoA ligation and dehydration catalyzed by sidI and sidH respectively. The acetylation of N(5)-hydroxyornithine for FC biosynthesis involves the constitutively expressed sidL. FC is hydroxylated to HFC by an as yet uncharacterized enzyme during conidiation. Assembly of fusarinine C (FsC) and FC is catalyzed by two different nonribosomal peptide synthetases (NRPS), sidD and sidC respectively. Subsequently, sidG catalyzes N2-acetylation of FsC for forming TAFC. Both extra- and intracellular siderophores are crucial for growth during iron limitation and virulence. In Aspergillus fumigatus (strain ATCC MYA-4609 / CBS 101355 / FGSC A1100 / Af293) (Neosartorya fumigata), this protein is Acyl-CoA ligase sidI.